The chain runs to 119 residues: Lamprin 1.8-10 (119 aa).

Positions 1-19 (MAATMQALLVIALLHLATA) are cleaved as a signal peptide. 7 repeat units span residues 41-45 (GGLGY), 46-50 (GGLGY), 51-55 (GGLGY), 56-60 (GGLGV), 61-65 (AGLGY), 66-70 (GGLGY), and 86-90 (GGLGY). The segment at 41 to 90 (GGLGYGGLGYGGLGYGGLGVAGLGYGGLGYPGAALGGAYTHHAALGGLGY) is 7 X 5 AA approximate repeats.

The polymeric lamprin chains self-aggregate to form fibers and have secondary structures particularly rich in beta-sheets and in beta-turns.

The protein resides in the secreted. It is found in the extracellular space. The protein localises to the extracellular matrix. Its function is as follows. Self-aggregating protein that is part of the soluble form of lamprin. This is Lamprin 1.8-10 from Petromyzon marinus (Sea lamprey).